A 193-amino-acid polypeptide reads, in one-letter code: MRGRDEDTGEFRGASRSQQRREALEIFDLGEKLVALTPAQLAKLPVPESLIPHIEESKRITSHIAHKRQLAFLAKHMRREDDETLDAIRDALDANSDTARREVAAIHRVERWRERLLAEGDVALAELLEAYPAADRQQLRQLVRNAIHERAKNKPPRAYRELFQVLRDLSQKPGLESGDAGLEDEESASENDE.

Basic and acidic residues predominate over residues 1–10; sequence MRGRDEDTGE. Disordered regions lie at residues 1–20 and 170–193; these read MRGRDEDTGEFRGASRSQQR and SQKPGLESGDAGLEDEESASENDE. Acidic residues predominate over residues 181–193; that stretch reads GLEDEESASENDE.

Belongs to the DarP family.

It is found in the cytoplasm. Its function is as follows. Member of a network of 50S ribosomal subunit biogenesis factors which assembles along the 30S-50S interface, preventing incorrect 23S rRNA structures from forming. Promotes peptidyl transferase center (PTC) maturation. The protein is Dual-action ribosomal maturation protein DarP of Xanthomonas campestris pv. campestris (strain 8004).